The sequence spans 659 residues: Forkhead box protein P1-B (659 aa).

Polar residues-rich tracts occupy residues 1–16 (MMQE…TAHQ) and 32–41 (KSTTPSSDIT). 2 disordered regions span residues 1–41 (MMQE…SDIT) and 229–263 (ENSV…NGQY). The segment at 289 to 314 (GVCKWPGCEAVFEDFQSFLKHLNNEH) adopts a C2H2-type zinc-finger fold. The interval 331-352 (VQQLELQLAKDKERLQAMMTHL) is leucine-zipper. Residues 365 to 369 (PLNLV) are CTBP1-binding. The interval 379 to 413 (PAASPPLSLPQTPTTPTAPLTPLSQTHSVITPTSL) is disordered. The segment covering 387–404 (LPQTPTTPTAPLTPLSQT) has biased composition (low complexity). Residues 448-538 (RPPFTYASLI…PQKISGSPAL (91 aa)) constitute a DNA-binding region (fork-head). Positions 590–659 (GAMDHGNSNG…EDDHGTEDML (70 aa)) are disordered. The segment covering 595 to 605 (GNSNGSDSSPG) has biased composition (polar residues). Residues 641 to 659 (PDFDHHRDYEDDHGTEDML) show a composition bias toward basic and acidic residues.

As to expression, shows complex and dynamic expression during early embryonic development. Prominent in many regions of the developing central nervous system, particularly in midbrain-hindbrain boundary, hindbrain and spinal cord. Strongly expressed in the retina, ear, branchial arches, hatching gland, heart, pronephric duct, gut, proctodeum, pectoral fin and swim bladder.

The protein resides in the nucleus. Transcriptional repressor. The chain is Forkhead box protein P1-B (foxp1b) from Danio rerio (Zebrafish).